Reading from the N-terminus, the 97-residue chain is Small ribosomal subunit protein bS6 (97 aa).

Belongs to the bacterial ribosomal protein bS6 family.

Its function is as follows. Binds together with bS18 to 16S ribosomal RNA. This is Small ribosomal subunit protein bS6 from Lactococcus lactis subsp. cremoris (strain MG1363).